Reading from the N-terminus, the 228-residue chain is LexA repressor (228 aa).

The segment at residues 26 to 46 (FDEMKDALDLRSKSGIHRLIT) is a DNA-binding region (H-T-H motif). Residues Ser-149 and Lys-187 each act as for autocatalytic cleavage activity in the active site.

Belongs to the peptidase S24 family. Homodimer.

It carries out the reaction Hydrolysis of Ala-|-Gly bond in repressor LexA.. Represses a number of genes involved in the response to DNA damage (SOS response), including recA and lexA. Has been shown to bind to the direct repeat sequence 5'-GTT-N(7)-GTTC-3'. In the presence of single-stranded DNA, RecA interacts with LexA causing an autocatalytic cleavage which disrupts the DNA-binding part of LexA, leading to derepression of the SOS regulon and eventually DNA repair. This Cereibacter sphaeroides (strain ATCC 17023 / DSM 158 / JCM 6121 / CCUG 31486 / LMG 2827 / NBRC 12203 / NCIMB 8253 / ATH 2.4.1.) (Rhodobacter sphaeroides) protein is LexA repressor.